A 377-amino-acid polypeptide reads, in one-letter code: Pseudouridylate synthase RPUSD4, mitochondrial (377 aa).

Residues 1 to 15 (MAAPRWSASGPWIRG) constitute a mitochondrion transit peptide. Residues 36-62 (AASTAINAQRLAEKLRAQKREQDTKKE) are a coiled coil. The active site involves Asp-153.

The protein belongs to the pseudouridine synthase RluA family. In terms of assembly, interacts with 16S mt-rRNA, mt-tRNA(Phe) and mt-tRNA(Met). Forms a regulatory protein-RNA complex, consisting of RCC1L, NGRN, RPUSD3, RPUSD4, TRUB2, FASTKD2 and 16S mt-rRNA.

Its subcellular location is the mitochondrion matrix. It localises to the nucleus. It is found in the cytoplasm. It carries out the reaction uridine in 5S rRNA = pseudouridine in 5S rRNA. The catalysed reaction is a uridine in tRNA = a pseudouridine in tRNA. The enzyme catalyses a uridine in mRNA = a pseudouridine in mRNA. Its function is as follows. Catalyzes uridine to pseudouridine isomerization (pseudouridylation) of different mitochondrial RNA substrates. Acts on position 1397 in 16S mitochondrial ribosomal RNA (16S mt-rRNA). This modification is required for the assembly of 16S mt-rRNA into a functional mitochondrial ribosome. As a component of a functional protein-RNA module, consisting of RCC1L, NGRN, RPUSD3, RPUSD4, TRUB2, FASTKD2 and 16S mt-rRNA, controls 16S mt-rRNA abundance and is required for intra-mitochondrial translation. Acts on position 39 in mitochondrial tRNA(Phe). Also catalyzes pseudouridylation of mRNAs in nucleus: acts as a regulator of pre-mRNA splicing by mediating pseudouridylation of pre-mRNAs at locations associated with alternatively spliced regions. Pseudouridylation of pre-mRNAs near splice sites directly regulates mRNA splicing and mRNA 3'-end processing. The sequence is that of Pseudouridylate synthase RPUSD4, mitochondrial from Homo sapiens (Human).